The primary structure comprises 974 residues: ATP-dependent RNA helicase glh-2 (974 aa).

Residues 212 to 435 (HESGFGGGKS…SGFGGGNDGG (224 aa)) form a disordered region. Over residues 215-250 (GFGGGKSGGFGGGNSGGSGFGSGGNSNGFGSGGGGQ) the composition is skewed to gly residues. Residues 256–267 (NNNCFNCQQPGH) are compositionally biased toward polar residues. CCHC-type zinc fingers lie at residues 257–274 (NNCFNCQQPGHRSNDCPE) and 282–299 (RVCYNCQQPGHNSRDCPE). Composition is skewed to basic and acidic residues over residues 268–282 (RSNDCPEPKKEREPR) and 293–307 (NSRDCPEERKPREGR). A compositionally biased stretch (gly residues) spans 309–364 (GFTGGSSGFGGGNGGGTGFDSGLTNGFGSGNNGESGFGSGGFGGNSNGFGSGGGGQ). Polar residues predominate over residues 370 to 381 (NNNCFNCQQPGH). 2 consecutive CCHC-type zinc fingers follow at residues 371-388 (NNCFNCQQPGHRSNDCPE) and 396-413 (RVCYNCQQPGHNSRDCPE). Composition is skewed to basic and acidic residues over residues 382–396 (RSNDCPEPKKEREPR) and 407–421 (NSRDCPEERKPREGR). A compositionally biased stretch (gly residues) spans 426–435 (SGFGGGNDGG). 2 consecutive CCHC-type zinc fingers follow at residues 453-470 (MKCFNCKGEGHRSAECPE) and 473-490 (RGCFNCGEQGHRSNECPN). Positions 552 to 580 (KTFSEANLGETMKKNVAHAGYTKTTPIQQ) match the Q motif motif. The Helicase ATP-binding domain maps to 583–767 (LPLIHQGHDI…RNHLKEGYIM (185 aa)). Position 596-603 (596-603 (AQTGSGKT)) interacts with ATP. Residues 710–713 (DEAD) carry the DEAD box motif. One can recognise a Helicase C-terminal domain in the interval 803-950 (DIDSYTTEKN…LVPEWMQGAS (148 aa)).

The protein belongs to the DEAD box helicase family. DDX4/VASA subfamily. Interacts (via C-terminus) with kgb-1.

The catalysed reaction is ATP + H2O = ADP + phosphate + H(+). In terms of biological role, probable ATP-binding RNA helicase. In Caenorhabditis elegans, this protein is ATP-dependent RNA helicase glh-2 (glh-2).